Here is a 395-residue protein sequence, read N- to C-terminus: S-adenosylmethionine synthase (395 aa).

Position 16 (His16) interacts with ATP. Mg(2+) is bound at residue Asp18. Glu44 contributes to the K(+) binding site. The L-methionine site is built by Glu57 and Gln100. Positions 100–110 (QSPDIAQGVDR) are flexible loop. Residues 167-169 (DAK), 233-234 (RF), Asp242, 248-249 (RK), Ala265, and Lys269 each bind ATP. Asp242 contributes to the L-methionine binding site. Lys273 is an L-methionine binding site.

Belongs to the AdoMet synthase family. In terms of assembly, homotetramer; dimer of dimers. The cofactor is Mg(2+). K(+) serves as cofactor.

It is found in the cytoplasm. The enzyme catalyses L-methionine + ATP + H2O = S-adenosyl-L-methionine + phosphate + diphosphate. It functions in the pathway amino-acid biosynthesis; S-adenosyl-L-methionine biosynthesis; S-adenosyl-L-methionine from L-methionine: step 1/1. In terms of biological role, catalyzes the formation of S-adenosylmethionine (AdoMet) from methionine and ATP. The overall synthetic reaction is composed of two sequential steps, AdoMet formation and the subsequent tripolyphosphate hydrolysis which occurs prior to release of AdoMet from the enzyme. The chain is S-adenosylmethionine synthase from Burkholderia cenocepacia (strain ATCC BAA-245 / DSM 16553 / LMG 16656 / NCTC 13227 / J2315 / CF5610) (Burkholderia cepacia (strain J2315)).